We begin with the raw amino-acid sequence, 1027 residues long: Fibril-forming collagen alpha chain (1027 aa).

The nonhelical region (N-terminal) stretch occupies residues 1 to 12 (YRAGPRYIQAQV). The disordered stretch occupies residues 1 to 1027 (YRAGPRYIQA…GPPGNSDYGA (1027 aa)). The interval 13–1023 (GPIGPRGPPG…PGPPGPPGNS (1011 aa)) is triple-helical region. Positions 17 to 26 (PRGPPGPPGS) are enriched in pro residues. 4-hydroxyproline; partial occurs at positions 21 and 24. 4-hydroxyproline occurs at positions 27 and 39. P53 bears the 3-hydroxyproline; partial mark. P54 is subject to 4-hydroxyproline. The span at 63–72 (SGDDGRDGEP) shows a compositional bias: basic and acidic residues. Residue P72 is modified to 4-hydroxyproline; partial. Residues 73–91 (GPRGGIGPMGPRGAGGMPG) are compositionally biased toward gly residues. 4-hydroxyproline is present on residues P90 and P93. 2 positions are modified to 5-hydroxylysine: K96 and K108. Residues K96 and K108 are each glycosylated (O-linked (Gal...) hydroxylysine). 2 positions are modified to 4-hydroxyproline; partial: P123 and P128. 4-hydroxyproline is present on P150. P161 carries the post-translational modification 3-hydroxyproline; partial. The residue at position 162 (P162) is a 4-hydroxyproline. P164 carries the 3-hydroxyproline; partial modification. P165, P174, P177, and P180 each carry 4-hydroxyproline. Over residues 168-182 (IGSTGSPGFPGTPGS) the composition is skewed to low complexity. Residues K183 and K192 each carry the 5-hydroxylysine modification. A glycan (O-linked (Gal...) hydroxylysine) is linked at K192. 4-hydroxyproline is present on residues P207, P216, P219, P228, and P237. Residues 227 to 249 (EPGASGESGLPGPSGFPGPRGMP) are compositionally biased toward low complexity. Position 243 is a 4-hydroxyproline; partial (P243). 4-hydroxyproline occurs at positions 249 and 255. Residues 259–268 (GAKGDGGPTG) show a composition bias toward gly residues. Residue K261 is modified to 5-hydroxylysine. Residue K261 is glycosylated (O-linked (Gal...) hydroxylysine). 2 positions are modified to 4-hydroxyproline; partial: P273 and P276. K279 is subject to 5-hydroxylysine. The O-linked (Gal...) hydroxylysine glycan is linked to K279. 3 positions are modified to 4-hydroxyproline; partial: P285, P291, and P303. Residues P306, P312, P321, P327, and P339 each carry the 4-hydroxyproline modification. K342 carries the 5-hydroxylysine modification. At P348 the chain carries 4-hydroxyproline; partial. The residue at position 351 (K351) is a 5-hydroxylysine; partial. A 4-hydroxyproline mark is found at P366, P372, and P375. Basic and acidic residues predominate over residues 380–396 (RPGKDGRPGIRGKDGKQ). The residue at position 381 (P381) is a 4-hydroxyproline; partial. Position 387 is a 4-hydroxyproline (P387). Over residues 398 to 420 (EQGPQGPQGLAGLQGRAGPPGAR) the composition is skewed to low complexity. At P416 the chain carries 3-hydroxyproline; partial. A 4-hydroxyproline mark is found at P417, P423, P429, and P432. Residues 437 to 446 (EQGDAGKDGE) show a composition bias toward basic and acidic residues. Residues 447–480 (TGAAGPPGAAGPTGARGPPGPRGQQGFQGLAGAQ) show a composition bias toward low complexity. A 4-hydroxyproline mark is found at P453, P465, and P483. A 4-hydroxyproline; partial mark is found at P500, P503, and P506. Positions 502 to 511 (GPAGPGGERG) are enriched in gly residues. Residues P513 and P525 each carry the 4-hydroxyproline modification. The span at 527–543 (ERGATGPAGPTGSPGVA) shows a compositional bias: low complexity. 4-hydroxyproline; partial is present on residues P533 and P536. The residue at position 540 (P540) is a 4-hydroxyproline. K546 is modified (5-hydroxylysine). Position 551 is a 3-hydroxyproline; partial (P551). A 4-hydroxyproline mark is found at P552 and P561. A 5-hydroxylysine mark is found at K567 and K573. An O-linked (Gal...) hydroxylysine glycan is attached at K573. Over residues 575 to 599 (SRGDIGPRGKAGERGKDGERGERGE) the composition is skewed to basic and acidic residues. Residue P603 is modified to 4-hydroxyproline. 5-hydroxylysine is present on K612. Residue K612 is glycosylated (O-linked (Gal...) hydroxylysine). Residue P621 is modified to 4-hydroxyproline; partial. P627 is subject to 4-hydroxyproline. Residues 635-644 (PAGSQGIQGQ) show a composition bias toward low complexity. P645 is subject to 4-hydroxyproline; partial. The residue at position 647 (P647) is a 3-hydroxyproline; partial. Position 648 is a 4-hydroxyproline (P648). Position 657 is a 5-hydroxylysine (K657). A glycan (O-linked (Gal...) hydroxylysine) is linked at K657. A 4-hydroxyproline mark is found at P663, P708, P711, P714, P717, and P723. Low complexity predominate over residues 698–710 (ETGAQGEIGLPGS). The segment covering 714–726 (PGLPGPSGQPGPS) has biased composition (pro residues). K738 carries the post-translational modification 5-hydroxylysine. O-linked (Gal...) hydroxylysine glycosylation is present at K738. 2 positions are modified to 4-hydroxyproline: P744 and P759. A compositionally biased stretch (basic and acidic residues) spans 750-771 (QGDRGSDGEPGRDGTKGERGED). K765 carries the 5-hydroxylysine modification. K765 carries O-linked (Gal...) hydroxylysine glycosylation. Residue P773 is modified to 3-hydroxyproline; partial. 4-hydroxyproline is present on residues P774, P783, and P792. The span at 802-814 (GPMGGQGMKGDGG) shows a compositional bias: gly residues. K810 carries the 5-hydroxylysine modification. O-linked (Gal...) hydroxylysine glycosylation occurs at K810. 3-hydroxyproline; partial is present on P815. 10 positions are modified to 4-hydroxyproline: P816, P843, P849, P855, P861, P867, P888, P894, P903, and P915. The span at 828–848 (AGPQGPTGPSGQAGAPGQEGA) shows a compositional bias: low complexity. Low complexity predominate over residues 884–894 (QRGLPGAAGPP). A compositionally biased stretch (low complexity) spans 911–927 (PVGAPGSQGPAGIMGMK). K927 bears the 5-hydroxylysine mark. K927 carries O-linked (Gal...) hydroxylysine glycosylation. Position 933 is a 5-hydroxylysine; partial (K933). Residues K936 and K939 each carry the 5-hydroxylysine modification. K936 is a glycosylation site (O-linked (Gal...) hydroxylysine). Residues 942–962 (TGLPGLQGLQGTPGHSGESGP) are compositionally biased toward low complexity. 4-hydroxyproline is present on P945. P954 is subject to 4-hydroxyproline; partial. A 4-hydroxyproline mark is found at P963 and P966. Residues 973–982 (GEAGGRGSQG) show a composition bias toward gly residues. Over residues 983–1001 (PPGKDGQPGPSGRVGPRGP) the composition is skewed to low complexity. 4-hydroxyproline is present on residues P984 and P990. At P1010 the chain carries 3-hydroxyproline; partial. The segment covering 1010 to 1020 (PPGPPGPPGPP) has biased composition (pro residues). P1011 carries the 4-hydroxyproline modification. P1013 bears the 3-hydroxyproline; partial mark. Position 1014 is a 4-hydroxyproline (P1014). A 3-hydroxyproline; partial modification is found at P1016. The residue at position 1017 (P1017) is a 4-hydroxyproline. P1019 bears the 3-hydroxyproline; partial mark. P1020 is modified (4-hydroxyproline). Residues 1024-1027 (DYGA) are nonhelical region (C-terminal).

Homotetramer.

It is found in the secreted. It localises to the extracellular space. The protein resides in the extracellular matrix. In terms of biological role, fibril-forming collagen. The protein is Fibril-forming collagen alpha chain of Riftia pachyptila (Vent tube worm).